The sequence spans 77 residues: U8-hexatoxin-Mg1a (77 aa).

Positions 1-22 (MKVFSFTIGLVVIISLFAFALA) are cleaved as a signal peptide. Positions 23 to 43 (YDEETDLMKKLVEMERAIEQR) are excised as a propeptide. 3 cysteine pairs are disulfide-bonded: C46-C60, C53-C65, and C59-C76.

Expressed by the venom gland.

It localises to the secreted. Intrathorax injection into crickets causes paralysis prolonged for more than 60 minutes, followed by recovery. This Macrothele gigas (Japanese funnel web spider) protein is U8-hexatoxin-Mg1a.